A 1164-amino-acid chain; its full sequence is Receptor-like protein kinase BRI1-like 3 (1164 aa).

Residues M1–G23 form the signal peptide. The Extracellular segment spans residues R24–S772. Residue N32 is glycosylated (N-linked (GlcNAc...) asparagine). A Cys pair 1 motif is present at residues C65–C72. LRR repeat units lie at residues R77–T98, N102–G123, S125–F146, N151–S173, R176–A197, S202–L224, N227–S248, L252–G274, N278–L300, T303–C325, S327–V347, R352–S375, N376–S397, V403–K424, S427–T448, K451–D473, N476–C498, N500–E523, K524–C546, and N548–Q570. Residues N96 and N112 are each glycosylated (N-linked (GlcNAc...) asparagine). Residue N156 is glycosylated (N-linked (GlcNAc...) asparagine). 3 N-linked (GlcNAc...) asparagine glycosylation sites follow: N212, N227, and N257. Residues N362 and N373 are each glycosylated (N-linked (GlcNAc...) asparagine). N461 is a glycosylation site (N-linked (GlcNAc...) asparagine). N-linked (GlcNAc...) asparagine glycans are attached at residues N532, N558, and N638. 4 LRR repeats span residues S640–M662, Y664–L686, A688–S711, and F712–T734. N-linked (GlcNAc...) asparagine glycosylation is found at N722 and N743. Residues C748–C755 carry the Cys pair 2 motif. The helical transmembrane segment at I773 to M793 threads the bilayer. Over A794–P1164 the chain is Cytoplasmic. 2 positions are modified to phosphothreonine: T847 and T855. In terms of domain architecture, Protein kinase spans F858–V1136. Residues I864–V872 and K886 each bind ATP. A Phosphotyrosine modification is found at Y931. D985 (proton acceptor) is an active-site residue. The residue at position 1020 (S1020) is a Phosphoserine. Position 1028 is a phosphotyrosine (Y1028).

The protein belongs to the protein kinase superfamily. Ser/Thr protein kinase family. In terms of processing, autophosphorylated on Tyr and Thr residues. As to expression, predominantly expressed in vascular tissues. Expressed only during postembryonic development with a very discrete pattern of expression, preferentially in the two protophloem cell files at the elongation zone of the root. The expression in these two cell files attenuates as the phloem cells differentiate in the upper root. In cotyledons and leaves, it is expressed in phloem cells, starting at the cotyledons and shoot apex, moving toward the basal part of the leaves, where the expression is weak. Expressed in the secondary and tertiary veins and in the upper part of the cotyledons and leaves. Weakly or not expressed in the inflorescence stems. Has some complementary expression with BRL1.

It is found in the cell membrane. The catalysed reaction is L-seryl-[protein] + ATP = O-phospho-L-seryl-[protein] + ADP + H(+). It catalyses the reaction L-threonyl-[protein] + ATP = O-phospho-L-threonyl-[protein] + ADP + H(+). The enzyme catalyses L-tyrosyl-[protein] + ATP = O-phospho-L-tyrosyl-[protein] + ADP + H(+). In terms of biological role, receptor with a dual specificity kinase activity acting on both serine/threonine- and tyrosine-containing substrates. Binds brassinolide. Regulates, in response to brassinosteroid binding, a signaling cascade involved in plant development. May be involved in cell growth and vascular differentiation. The polypeptide is Receptor-like protein kinase BRI1-like 3 (BRL3) (Arabidopsis thaliana (Mouse-ear cress)).